We begin with the raw amino-acid sequence, 382 residues long: D-alanine--D-alanine ligase (382 aa).

The 210-residue stretch at lysine 139 to alanine 348 folds into the ATP-grasp domain. Glutamate 168–isoleucine 223 contributes to the ATP binding site. Positions 300, 315, and 317 each coordinate Mg(2+).

Belongs to the D-alanine--D-alanine ligase family. The cofactor is Mg(2+). Mn(2+) serves as cofactor.

The protein resides in the cytoplasm. The catalysed reaction is 2 D-alanine + ATP = D-alanyl-D-alanine + ADP + phosphate + H(+). It functions in the pathway cell wall biogenesis; peptidoglycan biosynthesis. Its function is as follows. Cell wall formation. The protein is D-alanine--D-alanine ligase of Methylobacterium sp. (strain 4-46).